A 397-amino-acid polypeptide reads, in one-letter code: Linalool dehydratase/isomerase (397 aa).

The first 26 residues, 1–26, serve as a signal peptide directing secretion; that stretch reads MRFTLKTTAIVSAAALLAGFGPPPRA. Aspartate 64 serves as the catalytic Proton donor/acceptor. Disulfide bonds link cysteine 74/cysteine 127 and cysteine 196/cysteine 205. (2E)-geraniol is bound at residue cysteine 196.

Homotetramer. Homopentamer.

The protein localises to the periplasm. It catalyses the reaction (S)-linalool = beta-myrcene + H2O. The catalysed reaction is (2E)-geraniol = (S)-linalool. It participates in terpene metabolism; monoterpene degradation. With respect to regulation, is inhibited by molecular oxygen, high salt concentrations (NaCl, KCl, or MgCl(2)), urea, and Ti(III)citrate. Activity is not affected by EDTA. Functionally, anaerobically catalyzes the stereospecific hydration of beta-myrcene to (3S)-linalool and the isomerization of (3S)-linalool to geraniol. Is thus involved in the initial steps of the anaerobic degradation of the monoterpene beta-myrcene. Also catalyzes the reverse reactions, i.e. the isomerization of geraniol to linalool and the dehydration of linalool to myrcene. In this direction, the formation of myrcene from geraniol may be seen as a detoxification process for the monoterpene alcohol. Shows a relatively broad substrate specificity and can use various geraniol and linalool derivatives. Substrates required a specific alpha-methylallyl alcohol signature motif. Neither the monoterpenes alpha- and beta-ocimene nor the monoterpenoids citronellol and nerol can be used as substrates. The protein is Linalool dehydratase/isomerase of Castellaniella defragrans (strain DSM 12143 / CCUG 39792 / 65Phen) (Alcaligenes defragrans).